Consider the following 183-residue polypeptide: MSESEPVHIEYADETELLTEFRNFMSDPDTREKAANYLLNSLIDESILGIVFEVHHAYKTGSVAAIEGQPEDPKSFTIVDMPDMDVFGSTNSKKAIDCSCPNCNRIVAASRFAPHLEKCMGMGRNSSRIASRRIANTRDGGNYFGADEDDEDDADWSGEKRKKKIAPVRTNGSKKNVMKIYFL.

The segment at 98 to 119 (CSCPNCNRIVAASRFAPHLEKC) adopts an SGF11-type zinc-finger fold. The tract at residues 140–167 (GGNYFGADEDDEDDADWSGEKRKKKIAP) is disordered. The segment covering 146–156 (ADEDDEDDADW) has biased composition (acidic residues).

It belongs to the SGF11 family. Component of some SAGA transcription coactivator-HAT complexes. Within the SAGA complex, participates in a subcomplex of SAGA called the DUB module (deubiquitination module).

Its subcellular location is the nucleus. Its function is as follows. Component of the transcription regulatory histone acetylation (HAT) complex SAGA, a multiprotein complex that activates transcription by remodeling chromatin and mediating histone acetylation and deubiquitination. Within the SAGA complex, participates in a subcomplex that specifically deubiquitinates histone H2B. The SAGA complex is recruited to specific gene promoters by activators, where it is required for transcription. The polypeptide is SAGA-associated factor 11 homolog (Culex quinquefasciatus (Southern house mosquito)).